A 130-amino-acid polypeptide reads, in one-letter code: Ornithine decarboxylase antizyme (130 aa).

Positions 1-14 (SDVPVHHRTDHDRA) are enriched in basic and acidic residues. Residues 1–56 (SDVPVHHRTDHDRASLLTGSSRKSSVDSAGGSLFEASSRASSPSSSSSSECSDTES) are disordered. A compositionally biased stretch (polar residues) spans 17–27 (LTGSSRKSSVD). Over residues 32–51 (SLFEASSRASSPSSSSSSEC) the composition is skewed to low complexity.

The protein belongs to the ODC antizyme family. Interacts with ODC1 and thereby sterically blocks ODC homodimerization.

In terms of biological role, ornithine decarboxylase (ODC) antizyme protein that negatively regulates ODC activity and intracellular polyamine biosynthesis and uptake in response to increased intracellular polyamine levels. Binds to ODC monomers, inhibiting the assembly of the functional ODC homodimer, and targets the monomers for ubiquitin-independent proteolytic destruction by the 26S proteasome. In Drosophila virilis (Fruit fly), this protein is Ornithine decarboxylase antizyme (Oda).